Here is a 67-residue protein sequence, read N- to C-terminus: Probable Sec-independent protein translocase protein TatE (67 aa).

A helical transmembrane segment spans residues 1–21 (MGEISITKLLVVAALVVLLFG). Positions 45–67 (DEDAGAKKDANGDLPAEKLTHKE) are disordered.

It belongs to the TatA/E family. TatE subfamily.

It is found in the cell inner membrane. Part of the twin-arginine translocation (Tat) system that transports large folded proteins containing a characteristic twin-arginine motif in their signal peptide across membranes. TatE shares overlapping functions with TatA. The sequence is that of Probable Sec-independent protein translocase protein TatE from Escherichia fergusonii (strain ATCC 35469 / DSM 13698 / CCUG 18766 / IAM 14443 / JCM 21226 / LMG 7866 / NBRC 102419 / NCTC 12128 / CDC 0568-73).